A 70-amino-acid polypeptide reads, in one-letter code: UPF0270 protein VV1_1320 (70 aa).

Belongs to the UPF0270 family.

This chain is UPF0270 protein VV1_1320, found in Vibrio vulnificus (strain CMCP6).